The following is an 813-amino-acid chain: Raf homolog serine/threonine-protein kinase (813 aa).

A disordered region spans residues 1 to 79 (MSRINFKKSS…GGAGTSDKEP (79 aa)). Residues 9–23 (SSASTTPTSPHCPSP) are compositionally biased toward low complexity. The RBD domain occupies 85–161 (KMIMVHLPFD…PGNELWVHSE (77 aa)). Residues 170-217 (KHAIVRRTFIPPKSCDVCNNPIWMMGFRCEFCQFKFHQRCSSFAPLYC) form a Phorbol-ester/DAG-type zinc finger. Zn(2+) contacts are provided by Cys184, Cys187, Cys198, Cys201, His206, Cys209, and Cys217. Polar residues-rich tracts occupy residues 258–273 (TSGQ…SHPD) and 291–301 (SPQNETSQLSP). Disordered stretches follow at residues 258 to 315 (TSGQ…SAPN), 338 to 358 (QRLE…QARH), and 383 to 472 (TPLG…PHHE). Residues 338 to 348 (QRLEEESRDKT) show a composition bias toward basic and acidic residues. The span at 386–399 (GSNSPSSTCSSPPG) shows a compositional bias: low complexity. The segment covering 406-421 (TLGQSPNVSGSTTSSL) has biased composition (polar residues). Residues 453 to 462 (SPGERLDAQR) are compositionally biased toward basic and acidic residues. Positions 481 to 748 (FIIQYKVGSG…VLERLRDIIL (268 aa)) constitute a Protein kinase domain. ATP is bound by residues 487-495 (VGSGSFGTV) and Lys507. The active-site Proton acceptor is Asp602.

This sequence belongs to the protein kinase superfamily. TKL Ser/Thr protein kinase family. RAF subfamily. As to quaternary structure, interacts with cdf-1 in a zinc-dependent manner which promotes its activity. Zn(2+) serves as cofactor.

The catalysed reaction is L-seryl-[protein] + ATP = O-phospho-L-seryl-[protein] + ADP + H(+). It carries out the reaction L-threonyl-[protein] + ATP = O-phospho-L-threonyl-[protein] + ADP + H(+). Functionally, protein kinase that participates in the induction of vulva and has roles in fertility and viability. Acts downstream of the Ras protein let-60. Required for progression of developing oocytes through the pachytene stage. Plays a role in responses to M.nematophilum-mediated bacterial infection by promoting tail swelling and preventing constipation. Positively regulates lifespan upstream of mek-2 and mpk-1. In Caenorhabditis elegans, this protein is Raf homolog serine/threonine-protein kinase (lin-45).